Here is a 550-residue protein sequence, read N- to C-terminus: Chaperonin GroEL (550 aa).

Residues 30-33, lysine 51, 87-91, glycine 416, 480-482, and aspartate 496 each bind ATP; these read TLGP, DGTTT, and NVA. Residues 525–550 form a disordered region; that stretch reads LPKKDDEGGGGDMGGMGGMGGMGGMM. Over residues 534–550 the composition is skewed to gly residues; that stretch reads GGDMGGMGGMGGMGGMM.

This sequence belongs to the chaperonin (HSP60) family. As to quaternary structure, forms a cylinder of 14 subunits composed of two heptameric rings stacked back-to-back. Interacts with the co-chaperonin GroES.

It is found in the cytoplasm. It carries out the reaction ATP + H2O + a folded polypeptide = ADP + phosphate + an unfolded polypeptide.. Its function is as follows. Together with its co-chaperonin GroES, plays an essential role in assisting protein folding. The GroEL-GroES system forms a nano-cage that allows encapsulation of the non-native substrate proteins and provides a physical environment optimized to promote and accelerate protein folding. In Halorhodospira halophila (strain DSM 244 / SL1) (Ectothiorhodospira halophila (strain DSM 244 / SL1)), this protein is Chaperonin GroEL.